We begin with the raw amino-acid sequence, 244 residues long: Homeobox-leucine zipper protein HOX14 (244 aa).

Positions 25–64 (ASGEVQGERPRARRRRRRGARCVGGGGGGGEVDGGDPKKR) are disordered. Basic residues predominate over residues 35–44 (RARRRRRRGA). Residues 46–56 (CVGGGGGGGEV) are compositionally biased toward gly residues. Residues 59 to 118 (GDPKKRRLSDEQVEMLELSFREERKLETGRKVHLASELGLDPKQVAVWFQNRRARHKSKL) constitute a DNA-binding region (homeobox). A coiled-coil region spans residues 108–167 (QNRRARHKSKLLEEEFSKLKHAHDAAILHKCHLENEVLRLKERLVVAEEEVRRLRSAAGS).

Belongs to the HD-ZIP homeobox family. Class I subfamily. As to expression, expressed in roots, stems, leaf blades and panicles.

It is found in the nucleus. Probable transcription factor. The polypeptide is Homeobox-leucine zipper protein HOX14 (HOX14) (Oryza sativa subsp. indica (Rice)).